The primary structure comprises 343 residues: Interferon-inducible protein AIM2 (343 aa).

Positions 1 to 87 (MESKYKEILL…AKRLQEEKEK (87 aa)) constitute a Pyrin domain. Positions 138–337 (MVAQQESIRE…SGVHSTIKVI (200 aa)) constitute an HIN-200 domain.

The protein belongs to the HIN-200 family. In terms of assembly, self-associates; forms homooligomers in response to cytosolic double-stranded DNA (dsDNA) and the dsDNA seems to serve as oligomerization platform. Component of AIM2 inflammasome, which consists of a signal sensor component (AIM2), an adapter (PYCARD/ASC), which recruits an effector pro-inflammatory caspase (CASP1). Interacts (via pyrin domain) with PYCARD/ASC (via pyrin domain); interaction is direct. Component of the AIM2 PANoptosome complex, a multiprotein complex that drives inflammatory cell death (PANoptosis). Interacts with PYDC5; disrupts assembly of the AIM2 inflammasome complex. Interacts with EIF2AK2/PKR. Interacts with MAPRE1. Interacts with IFI16. Interacts with isoform IFI16-beta of IFI16; preventing the interaction between AIM2 and PYCARD/ASC. Interacts with RACK1; promoting association with PP2A phosphatase and dephosphorylation of AKT1. Interacts with TRIM11; promoting AIM2 recruitment to autophagosomes and autophagy-dependent degradation. (Microbial infection) Interacts with human herpesvirus 8 protein SOX/ORF37; this interaction inhibits AIM2 polymerization and subsequent inflammasome activation. Degraded via selective autophagy following interaction with TRIM11. As to expression, expressed in spleen, small intestine, peripheral blood leukocytes, and testis.

It is found in the cytoplasm. It localises to the inflammasome. The protein resides in the nucleus. With respect to regulation, inactive in absence of double-stranded DNA (dsDNA). Homooligomerizes upon binding to dsDNA, dsDNA serving as an oligomerization platform. AIM2 requires large dsDNA to generate a structural template that couples dsDNA ligand-binding and homooligomerization. Homooligomerization is followed by recruitment of PYCARD/ASC to initiate speck formation (nucleation). AIM2 and PYCARD/ASC homooligomer filaments assemble bidirectionally and the recognition between AIM2 and PYCARD/ASC oligomers occurs in a head-to-tail manner. Clustered PYCARD/ASC nucleates the formation of CASP1 filaments through the interaction of their respective CARD domains, acting as a platform for CASP1 polymerization and activation. Active CASP1 then specifically processes protein precursors, such as gasdermin-D (GSDMD), IL1B and IL18, leading to the release of mature cytokines in the extracellular milieu or pyroptosis, depending on cell type. AIM2 can be activated in response to events that cause genomic DNA (HIV protease inhibitor nelfinavir) or mitochondrial DNA release in the cytoplasm (such as Perfluoroalkyl substance pollutants or cholesterol overload). Activation of the AIM2 inflammasome is inhibited by isoform IFI16-beta of IFI16, which prevents the interaction between AIM2 and PYCARD/ASC. Activation of the AIM2 inflammasome is inhibited by TRIM11, which promotes autophagy-dependent degradation of AIM2. Functionally, sensor component of the AIM2 inflammasome, which mediates inflammasome activation in response to the presence of double-stranded DNA (dsDNA) in the cytosol, leading to subsequent pyroptosis. Inflammasomes are supramolecular complexes that assemble in the cytosol in response to pathogens and other damage-associated signals and play critical roles in innate immunity and inflammation. Acts as a recognition receptor (PRR): specifically recognizes and binds dsDNA in the cytosol, and mediates the formation of the inflammasome polymeric complex composed of AIM2, CASP1 and PYCARD/ASC. Recruitment of pro-caspase-1 (proCASP1) to the AIM2 inflammasome promotes caspase-1 (CASP1) activation, which subsequently cleaves and activates inflammatory cytokines IL1B and IL18 and gasdermin-D (GSDMD), promoting cytokine secretion. In some cells, CASP1 activation mediates cleavage and activation of GSDMD, triggering pyroptosis without promoting cytokine secretion. Detects cytosolic dsDNA of viral and bacterial origin in a non-sequence-specific manner. Involved in the DNA damage response caused by acute ionizing radiation by mediating pyroptosis of intestinal epithelial cells and bone marrow cells in response to double-strand DNA breaks. Mechanistically, AIM2 senses DNA damage in the nucleus to mediate inflammasome assembly and inflammatory cell death. Also acts as a regulator of neurodevelopment via its role in the DNA damage response: acts by promoting neural cell death in response to DNA damage in the developing brain, thereby purging genetically compromised cells of the central nervous system. Pyroptosis mediated by the AIM2 inflammasome in response to DNA damage is dependent on GSDMD without involving IL1B and IL18 cytokine secretion. Also acts as a mediator of pyroptosis, necroptosis and apoptosis (PANoptosis), an integral part of host defense against pathogens, in response to bacterial infection. Can also trigger PYCARD/ASC-dependent, caspase-1-independent cell death that involves caspase-8 (CASP8). Also acts as a tumor suppressor independently of its role in inflammatory response. Able to suppress overt cell proliferation in enterocytes: restricts stem cell proliferation in the intestinal mucosa in an inflammasome-independent manner, contributing to a decrease in the likelihood of colorectal cancer development. AIM2 suppresses cell proliferation by inhibiting phosphorylation of AKT1 at 'Ser-473', preventing AKT1 activation and AKT-mTOR signaling pathway. Inhibits AKT1 phosphorylation both by inhibiting the activity of PRKDC/DNA-PK kinase and promoting dephosphorylation by PP2A phosphatase. Also acts as a key regulator of regulatory T-cells (Treg) homeostasis by promoting their stability: acts by preventing AKT1 activation. Its role in Treg homeostasis is important to restain autoimmune diseases. The chain is Interferon-inducible protein AIM2 from Homo sapiens (Human).